Here is a 645-residue protein sequence, read N- to C-terminus: Translation factor GUF1 homolog, mitochondrial (645 aa).

The tr-type G domain occupies 40-215; sequence EKIRNFGIVA…AIVERVPAPT (176 aa). GTP-binding positions include 49-56, 108-112, and 162-165; these read AHVDHGKS, DTPGH, and NKID.

It belongs to the TRAFAC class translation factor GTPase superfamily. Classic translation factor GTPase family. LepA subfamily.

Its subcellular location is the mitochondrion inner membrane. The enzyme catalyses GTP + H2O = GDP + phosphate + H(+). In terms of biological role, promotes mitochondrial protein synthesis. May act as a fidelity factor of the translation reaction, by catalyzing a one-codon backward translocation of tRNAs on improperly translocated ribosomes. Binds to mitochondrial ribosomes in a GTP-dependent manner. In Caenorhabditis briggsae, this protein is Translation factor GUF1 homolog, mitochondrial.